We begin with the raw amino-acid sequence, 199 residues long: Crossover junction endodeoxyribonuclease RuvC (199 aa).

Catalysis depends on residues aspartate 17, glutamate 76, and aspartate 148. Mg(2+) is bound by residues aspartate 17, glutamate 76, and aspartate 148.

This sequence belongs to the RuvC family. In terms of assembly, homodimer which binds Holliday junction (HJ) DNA. The HJ becomes 2-fold symmetrical on binding to RuvC with unstacked arms; it has a different conformation from HJ DNA in complex with RuvA. In the full resolvosome a probable DNA-RuvA(4)-RuvB(12)-RuvC(2) complex forms which resolves the HJ. Mg(2+) serves as cofactor.

The protein resides in the cytoplasm. The catalysed reaction is Endonucleolytic cleavage at a junction such as a reciprocal single-stranded crossover between two homologous DNA duplexes (Holliday junction).. Its function is as follows. The RuvA-RuvB-RuvC complex processes Holliday junction (HJ) DNA during genetic recombination and DNA repair. Endonuclease that resolves HJ intermediates. Cleaves cruciform DNA by making single-stranded nicks across the HJ at symmetrical positions within the homologous arms, yielding a 5'-phosphate and a 3'-hydroxyl group; requires a central core of homology in the junction. The consensus cleavage sequence is 5'-(A/T)TT(C/G)-3'. Cleavage occurs on the 3'-side of the TT dinucleotide at the point of strand exchange. HJ branch migration catalyzed by RuvA-RuvB allows RuvC to scan DNA until it finds its consensus sequence, where it cleaves and resolves the cruciform DNA. The polypeptide is Crossover junction endodeoxyribonuclease RuvC (Mannheimia succiniciproducens (strain KCTC 0769BP / MBEL55E)).